A 681-amino-acid chain; its full sequence is Sodium-dependent phosphate transporter 1 (681 aa).

The next 6 helical transmembrane spans lie at 25–45 (NLWM…SVGA), 66–86 (ACIL…AKVS), 106–126 (LMAG…VASF), 162–182 (IVMS…ILFF), 201–221 (ALPI…MYTG), and 234–254 (GTIL…WFFV). Residues 266-295 (VKSSPSESPLMEKKSNLKEDHEETKMAPGD) are disordered. Phosphoserine is present on residues S269 and S273. Residues 275-295 (LMEKKSNLKEDHEETKMAPGD) show a composition bias toward basic and acidic residues. A helical transmembrane segment spans residues 514–534 (VSLLFQFLQILTACFGSFAHG). Residues 553–560 (KQEASTKA) form an a region. 3 helical membrane passes run 561–581 (ATPI…LWVW), 602–622 (FSIE…GLPI), and 652–672 (IFMA…AIMA).

Belongs to the inorganic phosphate transporter (PiT) (TC 2.A.20) family. Ubiquitously expressed.

It is found in the cell membrane. The enzyme catalyses 2 Na(+)(out) + phosphate(out) = 2 Na(+)(in) + phosphate(in). In terms of biological role, sodium-phosphate symporter which preferentially transports the monovalent form of phosphate with a stoichiometry of two sodium ions per phosphate ion. May play a role in extracellular matrix and cartilage calcification as well as in vascular calcification. Essential for cell proliferation but this function is independent of its phosphate transporter activity. Its function is as follows. (Microbial infection) May function as a retroviral receptor but do not confer infection susceptibility to Gibbon Ape Leukemia Virus (GaLV), Simian sarcoma-associated virus (SSAV) and Feline leukemia virus subgroup B (FeLV-B). This Mus musculus (Mouse) protein is Sodium-dependent phosphate transporter 1 (Slc20a1).